Reading from the N-terminus, the 362-residue chain is Sulfate/thiosulfate import ATP-binding protein CysA (362 aa).

The ABC transporter domain maps to 13-243; that stretch reads ITVRDAYKRY…PTNAFVMSFL (231 aa). Residue 45–52 participates in ATP binding; the sequence is GPSGSGKS.

Belongs to the ABC transporter superfamily. Sulfate/tungstate importer (TC 3.A.1.6) family. As to quaternary structure, the complex is composed of two ATP-binding proteins (CysA), two transmembrane proteins (CysT and CysW) and a solute-binding protein (CysP).

Its subcellular location is the cell membrane. It carries out the reaction sulfate(out) + ATP + H2O = sulfate(in) + ADP + phosphate + H(+). It catalyses the reaction thiosulfate(out) + ATP + H2O = thiosulfate(in) + ADP + phosphate + H(+). Functionally, part of the ABC transporter complex CysAWTP involved in sulfate/thiosulfate import. Responsible for energy coupling to the transport system. In Mycolicibacterium paratuberculosis (strain ATCC BAA-968 / K-10) (Mycobacterium paratuberculosis), this protein is Sulfate/thiosulfate import ATP-binding protein CysA.